A 108-amino-acid polypeptide reads, in one-letter code: ATP-dependent Clp protease adapter protein ClpS (108 aa).

This sequence belongs to the ClpS family. In terms of assembly, binds to the N-terminal domain of the chaperone ClpA.

Functionally, involved in the modulation of the specificity of the ClpAP-mediated ATP-dependent protein degradation. In Cupriavidus metallidurans (strain ATCC 43123 / DSM 2839 / NBRC 102507 / CH34) (Ralstonia metallidurans), this protein is ATP-dependent Clp protease adapter protein ClpS.